Consider the following 152-residue polypeptide: Leptin (152 aa).

Positions 1–26 (MDHILALVLALLPLSLCVALPGALDA) are cleaved as a signal peptide. A disulfide bridge connects residues C109 and C152.

It belongs to the leptin family. Expressed mostly in the liver.

The protein localises to the secreted. In terms of biological role, may function as part of a signaling pathway that acts to regulate the size of the body fat depot. The polypeptide is Leptin (lep) (Takifugu rubripes (Japanese pufferfish)).